We begin with the raw amino-acid sequence, 254 residues long: Ubiquinone biosynthesis O-methyltransferase (254 aa).

Residues Arg-47, Gly-78, Asp-99, and Met-141 each contribute to the S-adenosyl-L-methionine site.

Belongs to the methyltransferase superfamily. UbiG/COQ3 family.

The enzyme catalyses a 3-demethylubiquinol + S-adenosyl-L-methionine = a ubiquinol + S-adenosyl-L-homocysteine + H(+). The catalysed reaction is a 3-(all-trans-polyprenyl)benzene-1,2-diol + S-adenosyl-L-methionine = a 2-methoxy-6-(all-trans-polyprenyl)phenol + S-adenosyl-L-homocysteine + H(+). Its pathway is cofactor biosynthesis; ubiquinone biosynthesis. O-methyltransferase that catalyzes the 2 O-methylation steps in the ubiquinone biosynthetic pathway. The chain is Ubiquinone biosynthesis O-methyltransferase from Rhodopseudomonas palustris (strain BisB18).